The chain runs to 339 residues: Phomopsene synthase (339 aa).

The Mg(2+) site is built by aspartate 89, aspartate 94, asparagine 224, serine 228, and glutamate 232.

The protein belongs to the terpene synthase family. Requires Mg(2+) as cofactor.

It carries out the reaction (2E,6E,10E)-geranylgeranyl diphosphate = phomopsene + diphosphate. The catalysed reaction is (2E,6E,10E)-geranylgeranyl diphosphate = allokutznerene + diphosphate. It functions in the pathway secondary metabolite biosynthesis; terpenoid biosynthesis. Diterpene synthase that catalyzes the conversion of geranylgeranyl diphosphate (GGPP) to phomopsene, a diterpene previously reported from the fungus P.amygdali. Phomopsene is the main product, but the enzyme can also produce allokutznerene (about 50% of phomopsene production activity) and traces of spiroviolene. Cannot use geranyl diphosphate (GPP), farnesyl diphosphate (FPP) and geranylfarnesyl diphosphate (GFPP). The protein is Phomopsene synthase of Allokutzneria albata (Kibdelosporangium albatum).